Reading from the N-terminus, the 414-residue chain is Mu-like prophage FluMu F protein (414 aa).

It to phage Mu protein F.

Involved in virion morphogenesis. The chain is Mu-like prophage FluMu F protein from Haemophilus influenzae (strain ATCC 51907 / DSM 11121 / KW20 / Rd).